A 289-amino-acid polypeptide reads, in one-letter code: Protease HtpX homolog (289 aa).

The next 2 helical transmembrane spans lie at 11-31 (AALFGVLWAVLLGLGAIIAAG) and 34-54 (STTPIWIMALIGVATTAYGYW). His138 is a Zn(2+) binding site. Glu139 is an active-site residue. Zn(2+) is bound at residue His142. 2 helical membrane passes run 152–172 (SVVAAVAGVITSVGQMLLIFG) and 182–202 (LATIAMALLAPFAASLIQMAI). Glu207 lines the Zn(2+) pocket.

Belongs to the peptidase M48B family. Zn(2+) is required as a cofactor.

Its subcellular location is the cell membrane. The chain is Protease HtpX homolog from Paenarthrobacter aurescens (strain TC1).